We begin with the raw amino-acid sequence, 407 residues long: Na(+)-translocating NADH-quinone reductase subunit F (407 aa).

A helical membrane pass occupies residues 3–23 (IILGVVMFTLIVLALVLVILF). Residues 32–126 (GDITISVNDD…DMDIELPEEI (95 aa)) enclose the 2Fe-2S ferredoxin-type domain. Cys69, Cys75, Cys78, and Cys110 together coordinate [2Fe-2S] cluster. In terms of domain architecture, FAD-binding FR-type spans 129–269 (VKKWECTVIS…SGPFGEFFAK (141 aa)). The catalytic stretch occupies residues 272–389 (DAEMVFVGGG…PMMNAAVIGM (118 aa)).

The protein belongs to the NqrF family. In terms of assembly, composed of six subunits; NqrA, NqrB, NqrC, NqrD, NqrE and NqrF. It depends on [2Fe-2S] cluster as a cofactor. Requires FAD as cofactor.

The protein resides in the cell inner membrane. It carries out the reaction a ubiquinone + n Na(+)(in) + NADH + H(+) = a ubiquinol + n Na(+)(out) + NAD(+). Its function is as follows. NQR complex catalyzes the reduction of ubiquinone-1 to ubiquinol by two successive reactions, coupled with the transport of Na(+) ions from the cytoplasm to the periplasm. The first step is catalyzed by NqrF, which accepts electrons from NADH and reduces ubiquinone-1 to ubisemiquinone by a one-electron transfer pathway. The polypeptide is Na(+)-translocating NADH-quinone reductase subunit F (Vibrio campbellii (strain ATCC BAA-1116)).